The chain runs to 360 residues: MRKRISAIIMTLFMVLASCSNQLEAEKLAAESKNTFFDSLVKIGQGFQDIFGIFGNAIGDALGFNAVKSGDKKSKIGEHFKKIGDGLTTTKDKLNELSGEISEAKNANGSSIEAVKSAINSASDVFEQLITALTKLAGVAKEAGSTDIGDTASAAALARDKDGVEAIIAGIKAIIDVADKSGVNIEKGNAGGPVNAAANTDAPAALAANAAAGANSTAKLAAEVTKADPWAMIDKINSAKAAVGVQLDANTNYGAGELATGTPNQANGSKAATNADLAAAVALKAMAKGGKFSHAANEDGAVKAAAVSAVNKVLGVLDFIIRKTVSSNLDKIREAVKGIKYSEITETDATESGDAQPTTK.

The signal sequence occupies residues 1–18 (MRKRISAIIMTLFMVLAS). Cysteine 19 carries N-palmitoyl cysteine lipidation. Residue cysteine 19 is the site of S-diacylglycerol cysteine attachment.

This sequence belongs to the variable large protein (Vlp) family. Beta subfamily.

Its subcellular location is the cell outer membrane. Functionally, the Vlp and Vsp proteins are antigenically distinct proteins, only one vlp or vsp gene is transcriptionally active at any one time. Switching between these genes is a mechanism of host immune response evasion. The polypeptide is Variable large protein 14 (Borrelia hermsii).